The sequence spans 253 residues: Hydroxyacylglutathione hydrolase (253 aa).

Zn(2+) contacts are provided by histidine 54, histidine 56, aspartate 58, histidine 59, histidine 110, aspartate 127, and histidine 165.

This sequence belongs to the metallo-beta-lactamase superfamily. Glyoxalase II family. In terms of assembly, monomer. Zn(2+) is required as a cofactor.

It carries out the reaction an S-(2-hydroxyacyl)glutathione + H2O = a 2-hydroxy carboxylate + glutathione + H(+). Its pathway is secondary metabolite metabolism; methylglyoxal degradation; (R)-lactate from methylglyoxal: step 2/2. Thiolesterase that catalyzes the hydrolysis of S-D-lactoyl-glutathione to form glutathione and D-lactic acid. The chain is Hydroxyacylglutathione hydrolase from Idiomarina loihiensis (strain ATCC BAA-735 / DSM 15497 / L2-TR).